Consider the following 102-residue polypeptide: ATP-dependent Clp protease adapter protein ClpS (102 aa).

This sequence belongs to the ClpS family. Binds to the N-terminal domain of the chaperone ClpA.

Its function is as follows. Involved in the modulation of the specificity of the ClpAP-mediated ATP-dependent protein degradation. The sequence is that of ATP-dependent Clp protease adapter protein ClpS from Shewanella halifaxensis (strain HAW-EB4).